The following is a 149-amino-acid chain: Large ribosomal subunit protein bL9 (149 aa).

It belongs to the bacterial ribosomal protein bL9 family.

Its function is as follows. Binds to the 23S rRNA. The sequence is that of Large ribosomal subunit protein bL9 from Actinobacillus succinogenes (strain ATCC 55618 / DSM 22257 / CCUG 43843 / 130Z).